A 678-amino-acid chain; its full sequence is Probable N-methylproline demethylase (678 aa).

FMN-binding positions include glycine 59, glutamine 102, arginine 220, lysine 299, and 321–322; that span reads TR. Residues cysteine 345, cysteine 351, and cysteine 363 each contribute to the [4Fe-4S] cluster site. The FAD site is built by alanine 396, glutamate 415, glutamine 423, arginine 433, and alanine 460.

The protein in the N-terminal section; belongs to the NADH:flavin oxidoreductase/NADH oxidase family. Requires FMN as cofactor. FAD serves as cofactor. It depends on [4Fe-4S] cluster as a cofactor.

It carries out the reaction N-methyl-L-proline + NAD(+) + H2O = L-proline + formaldehyde + NADH + H(+). The protein operates within amine and polyamine degradation; stachydrine degradation. Possible NADH-dependent oxidase, may function as a demethylase that converts N-methylproline to proline. In Rhizobium meliloti (strain 1021) (Ensifer meliloti), this protein is Probable N-methylproline demethylase.